The sequence spans 90 residues: RNA-binding protein Hfq (90 aa).

Residues 9–68 (DPFLNALRRERVPVSIYLVNGIKLQGQVESFDQFVILLKNTVSQMVYKHAISTVVPARPF) enclose the Sm domain.

Belongs to the Hfq family. In terms of assembly, homohexamer.

RNA chaperone that binds small regulatory RNA (sRNAs) and mRNAs to facilitate mRNA translational regulation in response to envelope stress, environmental stress and changes in metabolite concentrations. Also binds with high specificity to tRNAs. In Shewanella baltica (strain OS155 / ATCC BAA-1091), this protein is RNA-binding protein Hfq.